Here is a 339-residue protein sequence, read N- to C-terminus: Fructose-1,6-bisphosphatase class 1 (339 aa).

Glu-94, Asp-116, Leu-118, and Asp-119 together coordinate Mg(2+). Substrate contacts are provided by residues 119–122 (DGSS), Asn-210, and Lys-276. Glu-282 provides a ligand contact to Mg(2+).

The protein belongs to the FBPase class 1 family. As to quaternary structure, homotetramer. The cofactor is Mg(2+).

It localises to the cytoplasm. It catalyses the reaction beta-D-fructose 1,6-bisphosphate + H2O = beta-D-fructose 6-phosphate + phosphate. The protein operates within carbohydrate biosynthesis; gluconeogenesis. The polypeptide is Fructose-1,6-bisphosphatase class 1 (Burkholderia ambifaria (strain ATCC BAA-244 / DSM 16087 / CCUG 44356 / LMG 19182 / AMMD) (Burkholderia cepacia (strain AMMD))).